A 200-amino-acid chain; its full sequence is 3-isopropylmalate dehydratase small subunit (200 aa).

The protein belongs to the LeuD family. LeuD type 1 subfamily. As to quaternary structure, heterodimer of LeuC and LeuD.

The enzyme catalyses (2R,3S)-3-isopropylmalate = (2S)-2-isopropylmalate. The protein operates within amino-acid biosynthesis; L-leucine biosynthesis; L-leucine from 3-methyl-2-oxobutanoate: step 2/4. Functionally, catalyzes the isomerization between 2-isopropylmalate and 3-isopropylmalate, via the formation of 2-isopropylmaleate. This is 3-isopropylmalate dehydratase small subunit from Proteus mirabilis (strain HI4320).